The sequence spans 333 residues: NADH-quinone oxidoreductase subunit H (333 aa).

Helical transmembrane passes span 15–35 (IALF…FVTY), 88–108 (YVLA…VLPF), 117–137 (IGVG…GVVA), 165–185 (LVMS…VDIV), 191–211 (VWFI…AVAE), 241–261 (FFML…TILF), 274–294 (IPGA…LIWF), and 313–333 (VLLP…AWFF).

The protein belongs to the complex I subunit 1 family. As to quaternary structure, NDH-1 is composed of 14 different subunits. Subunits NuoA, H, J, K, L, M, N constitute the membrane sector of the complex.

It is found in the cell membrane. The enzyme catalyses a quinone + NADH + 5 H(+)(in) = a quinol + NAD(+) + 4 H(+)(out). NDH-1 shuttles electrons from NADH, via FMN and iron-sulfur (Fe-S) centers, to quinones in the respiratory chain. The immediate electron acceptor for the enzyme in this species is believed to be ubiquinone. Couples the redox reaction to proton translocation (for every two electrons transferred, four hydrogen ions are translocated across the cytoplasmic membrane), and thus conserves the redox energy in a proton gradient. This subunit may bind ubiquinone. In Geobacillus kaustophilus (strain HTA426), this protein is NADH-quinone oxidoreductase subunit H.